Reading from the N-terminus, the 109-residue chain is Hainantoxin-XVIII-7 (109 aa).

The first 18 residues, 1–18, serve as a signal peptide directing secretion; the sequence is MKLSIIIIATSLVIAVVA. Positions 19 to 46 are excised as a propeptide; the sequence is FPSKDSKAIENDKTEQRMEIVVQETARA. Intrachain disulfides connect C47-C62, C55-C68, C59-C108, and C61-C81.

This sequence belongs to the neurotoxin 25 family. F7 subfamily. As to expression, expressed by the venom gland.

Its subcellular location is the secreted. Putative ion channel inhibitor. The chain is Hainantoxin-XVIII-7 from Cyriopagopus hainanus (Chinese bird spider).